The primary structure comprises 104 residues: Protein RnfH (104 aa).

It belongs to the UPF0125 (RnfH) family.

This is Protein RnfH from Pseudomonas fluorescens (strain ATCC BAA-477 / NRRL B-23932 / Pf-5).